An 825-amino-acid chain; its full sequence is AP-3 complex subunit delta (825 aa).

HEAT repeat units lie at residues 131–168 (GLAR…QYPE), 169–205 (AISA…RAPK), 207–243 (YLEF…YEPR), 244–281 (LVKK…LVGH), 285–323 (DKLA…THPS), 324–360 (LVSA…KENI), 363–400 (IVKT…KSTY), 469–513 (EKRT…LAHR), 515–547 (LLQA…LWVE), and 548–584 (KIVS…IVNT). The interval 787-825 (STNQGSMGDIVLETKSPIRVEKKKSKKKKKKKEKTSGKE) is disordered. The segment covering 807-819 (EKKKSKKKKKKKE) has biased composition (basic residues).

Belongs to the adaptor complexes large subunit family. As to quaternary structure, adaptor protein complex 3 (AP-3) is a heterotetramer composed of 2 large adaptins (apl5 and apl6), a medium adaptin (apm3) and a small adaptin (aps3).

The protein localises to the golgi apparatus. The protein resides in the cytoplasmic vesicle. It is found in the clathrin-coated vesicle membrane. Functionally, part of the AP-3 complex, an adaptor-related complex which is not clathrin-associated. The complex is associated with the Golgi region as well as more peripheral structures. It facilitates the budding of vesicles from the Golgi membrane and may be directly involved in trafficking to the vacuole. In Schizosaccharomyces pombe (strain 972 / ATCC 24843) (Fission yeast), this protein is AP-3 complex subunit delta (apl5).